The primary structure comprises 187 residues: Preprocaerulein clone PXC202 (187 aa).

Residues 1–9 constitute a propeptide that is removed on maturation; it reads NDERRFADG. Residues 1-21 form a disordered region; sequence NDERRFADGQQDYTGWMDFGR. Residue Y13 is modified to Sulfotyrosine. F19 is subject to Phenylalanine amide. Positions 23-73 are excised as a propeptide; the sequence is DDEDDVNERDVRGFGSFLGKALKAALKIGANALGGSPQQREANDERRFADG. Y77 is subject to Sulfotyrosine. F83 is subject to Phenylalanine amide. Residues 87–137 constitute a propeptide that is removed on maturation; it reads DDEDDVNERDVRGFGSFLGKALKAALKIGANALGGSLQQREVNDERRFADG. A Sulfotyrosine modification is found at Y141. F147 is modified (phenylalanine amide). The propeptide occupies 151–152; sequence DG. A Sulfotyrosine modification is found at Y156. A Phenylalanine amide modification is found at F162. A propeptide spanning residues 166–187 is cleaved from the precursor; that stretch reads DDEDDVHERDVRGFGSFLGKAL.

This sequence belongs to the gastrin/cholecystokinin family. As to expression, expressed by the skin glands.

The protein resides in the secreted. The pharmacological activities of caerulein are quite similar to the physiological activities of gastrin and related peptides. The sequence is that of Preprocaerulein clone PXC202 from Xenopus laevis (African clawed frog).